Reading from the N-terminus, the 187-residue chain is Interferon alpha-1/2 (187 aa).

Residues 1–23 (MALPCSFSVALVLLSCHSLCCLA) form the signal peptide. 2 disulfides stabilise this stretch: cysteine 24–cysteine 122 and cysteine 52–cysteine 160. N-linked (GlcNAc...) asparagine glycosylation is present at asparagine 101.

This sequence belongs to the alpha/beta interferon family.

The protein localises to the secreted. Functionally, produced by macrophages, IFN-alpha have antiviral activities. Interferon stimulates the production of two enzymes: a protein kinase and an oligoadenylate synthetase. The chain is Interferon alpha-1/2 from Canis lupus familiaris (Dog).